A 140-amino-acid polypeptide reads, in one-letter code: Large ribosomal subunit protein uL11 (140 aa).

Belongs to the universal ribosomal protein uL11 family. Part of the ribosomal stalk of the 50S ribosomal subunit. Interacts with L10 and the large rRNA to form the base of the stalk. L10 forms an elongated spine to which L12 dimers bind in a sequential fashion forming a multimeric L10(L12)X complex. In terms of processing, one or more lysine residues are methylated.

In terms of biological role, forms part of the ribosomal stalk which helps the ribosome interact with GTP-bound translation factors. The chain is Large ribosomal subunit protein uL11 from Desulforapulum autotrophicum (strain ATCC 43914 / DSM 3382 / VKM B-1955 / HRM2) (Desulfobacterium autotrophicum).